We begin with the raw amino-acid sequence, 279 residues long: Protease HtpX homolog (279 aa).

Transmembrane regions (helical) follow at residues 4-24 (IFLFLATNIAVLVVINIVLAV) and 34-54 (GSLLAYSAVVGFTGSIISLLM). His140 lines the Zn(2+) pocket. The active site involves Glu141. His144 provides a ligand contact to Zn(2+). The next 2 helical transmembrane spans lie at 155–175 (LIQGVVNTFVVFLSRIIANLI) and 189–209 (FLVSMVFQILFGFLASLIVMW). Glu215 serves as a coordination point for Zn(2+).

Belongs to the peptidase M48B family. Requires Zn(2+) as cofactor.

The protein localises to the cell inner membrane. The protein is Protease HtpX homolog of Neisseria gonorrhoeae (strain ATCC 700825 / FA 1090).